The primary structure comprises 229 residues: Glycine betaine/carnitine/choline transport system permease protein OpuCD (229 aa).

In terms of domain architecture, ABC transmembrane type-1 spans 22 to 202 (FYRHFLMSVY…LMAVIADLVM (181 aa)). The next 5 helical transmembrane spans lie at 27–47 (LMSV…GILI), 55–74 (GWVF…AMLA), 78–100 (LVMG…LPII), 148–168 (ALVI…GGLG), and 182–202 (AIIL…DLVM).

This sequence belongs to the binding-protein-dependent transport system permease family. CysTW subfamily. In terms of assembly, the complex is composed of two ATP-binding proteins (OpuCA), two transmembrane proteins (OpuCB and OpuCD) and a solute-binding protein (OpuCC).

It localises to the cell membrane. In terms of biological role, involved in a high affinity multicomponent binding-protein-dependent transport system for glycine betaine, carnitine and choline; probably responsible for the translocation of the substrate across the membrane. This is Glycine betaine/carnitine/choline transport system permease protein OpuCD (opuCD) from Bacillus subtilis (strain 168).